The chain runs to 176 residues: 3-hydroxyanthranilate 3,4-dioxygenase (176 aa).

R44 provides a ligand contact to O2. Residues H48, E54, and H92 each coordinate Fe cation. E54 serves as a coordination point for substrate. Residues R96 and E106 each contribute to the substrate site. Fe cation is bound by residues C121, C124, C158, and C161.

This sequence belongs to the 3-HAO family. As to quaternary structure, homodimer. It depends on Fe(2+) as a cofactor.

It catalyses the reaction 3-hydroxyanthranilate + O2 = (2Z,4Z)-2-amino-3-carboxymuconate 6-semialdehyde. The protein operates within cofactor biosynthesis; NAD(+) biosynthesis; quinolinate from L-kynurenine: step 3/3. Its function is as follows. Catalyzes the oxidative ring opening of 3-hydroxyanthranilate to 2-amino-3-carboxymuconate semialdehyde, which spontaneously cyclizes to quinolinate. The polypeptide is 3-hydroxyanthranilate 3,4-dioxygenase (Xanthomonas campestris pv. campestris (strain 8004)).